Reading from the N-terminus, the 336-residue chain is ATP-dependent 6-phosphofructokinase (336 aa).

G11 is a binding site for ATP. ADP is bound at residue 21–25 (RAVVR). ATP is bound by residues 72 to 73 (RY) and 102 to 105 (GDGS). D103 serves as a coordination point for Mg(2+). 125-127 (TID) contacts substrate. Residue D127 is the Proton acceptor of the active site. Residue R154 coordinates ADP. Residues R162 and 169-171 (MGR) contribute to the substrate site. ADP contacts are provided by residues 185–187 (GAD), K211, and 213–215 (KKH). Substrate-binding positions include E222, R244, and 250–253 (HIQR).

It belongs to the phosphofructokinase type A (PFKA) family. ATP-dependent PFK group I subfamily. Prokaryotic clade 'B1' sub-subfamily. In terms of assembly, homotetramer. Mg(2+) serves as cofactor.

It is found in the cytoplasm. It carries out the reaction beta-D-fructose 6-phosphate + ATP = beta-D-fructose 1,6-bisphosphate + ADP + H(+). It participates in carbohydrate degradation; glycolysis; D-glyceraldehyde 3-phosphate and glycerone phosphate from D-glucose: step 3/4. Allosterically activated by ADP and other diphosphonucleosides, and allosterically inhibited by phosphoenolpyruvate. Functionally, catalyzes the phosphorylation of D-fructose 6-phosphate to fructose 1,6-bisphosphate by ATP, the first committing step of glycolysis. The protein is ATP-dependent 6-phosphofructokinase of Streptococcus sanguinis (strain SK36).